A 488-amino-acid polypeptide reads, in one-letter code: Multidrug resistance outer membrane protein MdtP (488 aa).

The signal sequence occupies residues 1–23 (MINRQLSRLLLCSILGSTTLISG). Residue C24 is the site of N-palmitoyl cysteine attachment. The S-diacylglycerol cysteine moiety is linked to residue C24.

Belongs to the outer membrane factor (OMF) (TC 1.B.17) family. In terms of assembly, could be part of a tripartite efflux system composed of MdtN, MdtO and MdtP.

The protein resides in the cell outer membrane. Its function is as follows. Could be involved in resistance to puromycin, acriflavine and tetraphenylarsonium chloride. In Escherichia coli O157:H7, this protein is Multidrug resistance outer membrane protein MdtP (mdtP).